Reading from the N-terminus, the 341-residue chain is Heat-inducible transcription repressor HrcA (341 aa).

This sequence belongs to the HrcA family.

Functionally, negative regulator of class I heat shock genes (grpE-dnaK-dnaJ and groELS operons). Prevents heat-shock induction of these operons. This chain is Heat-inducible transcription repressor HrcA, found in Corynebacterium glutamicum (strain ATCC 13032 / DSM 20300 / JCM 1318 / BCRC 11384 / CCUG 27702 / LMG 3730 / NBRC 12168 / NCIMB 10025 / NRRL B-2784 / 534).